Reading from the N-terminus, the 22-residue chain is Brevinin-2LTa (22 aa).

As to expression, expressed by the skin glands.

The protein localises to the secreted. Its function is as follows. Has antibacterial activity. This is Brevinin-2LTa from Rana latastei (Italian agile frog).